A 1080-amino-acid chain; its full sequence is Adenylate cyclase type 7 (1080 aa).

The Cytoplasmic portion of the chain corresponds to 1 to 33; sequence MPAKGRYFLNEGEEGPDQDALYEKYQLTSQHGP. 6 helical membrane-spanning segments follow: residues 34–54, 63–83, 95–117, 122–142, 147–167, and 176–196; these read LLLTLLLVAATACVALIIIAF, QAILGMAFLVLAVFAALSVLM, ALALLTWACLVALGYVLVFDAWT, AWEQVPFFLFIVFVVYTLLPF, AVAVGAVSTASHLLVLGSLMG, and VGLQLLANAVIFLCGNLTGAF. The Cytoplasmic segment spans residues 197-594; sequence HKHQMQDASR…YRLAPIPRAR (398 aa). Positions 279-406 constitute a Guanylate cyclase 1 domain; it reads SILYADIVGF…HDVSLANRME (128 aa). The Mg(2+) site is built by Asp284, Ile285, and Asp328. Residues 284-289, 326-328, and Arg372 each bind ATP; these read DIVGFT and LGD. Residues 454-474 form a disordered region; the sequence is DPRSQQPPPPSQHLPRPKGDA. The segment at 477 to 482 is mediates regulation of adenylate cyclase activity by C5 alpha-induced G- beta and gamma pathway; the sequence is KMRASV. Residues 491–499 are mediates regulation of adenylate cyclase activity by sphingosine 1-phosphate-induced G alpha 13 pathway; the sequence is WGAARPFAH. A disordered region spans residues 504–546; that stretch reads ESVSSGETHVPNGRRPKSVPQRHRRTPDRSMSPKGRSEDDSYD. The segment at 506–584 is modulates adenylate cyclase activity by modulating the binding of G(s)alpha to the high-affinity G(s)alpha binding site in 7C1a/7C2; it reads VSSGETHVPN…IFLEKGFERE (79 aa). Basic residues predominate over residues 515–529; that stretch reads NGRRPKSVPQRHRRT. 3 consecutive transmembrane segments (helical) span residues 595-615, 620-640, and 669-688; these read HDFACASLIFVCILLVHVLLM, ALGVSFGLVACVLGLVLGLCF, and LTLAVLTIGSLLTVAIINLP. Residue Asn701 is glycosylated (N-linked (GlcNAc...) asparagine). The next 2 helical transmembrane spans lie at 718-737 and 746-773; these read PLPYYTCSCVLGFIACSVFL and VLLTVALVAYLVLFNLSPCWQWDCCGQG. N-linked (GlcNAc...) asparagine glycosylation is found at Asn776 and Asn781. A helical membrane pass occupies residues 794–814; it reads DLKTMTNFYLVLFYITLLTLS. The Cytoplasmic portion of the chain corresponds to 815-1080; that stretch reads RQIDYYCRLD…TAKFQGLGLN (266 aa). The region spanning 879–1023 is the Guanylate cyclase 2 domain; that stretch reads CVMFASVPDF…NTVNVASRME (145 aa). Residues Lys931, 1010–1012, 1017–1021, and Lys1057 contribute to the ATP site; these read DIW and NVASR.

The protein belongs to the adenylyl cyclase class-4/guanylyl cyclase family. Mg(2+) is required as a cofactor. The cofactor is Mn(2+). In terms of processing, phosphorylated by PRKCD.

The protein resides in the membrane. It carries out the reaction ATP = 3',5'-cyclic AMP + diphosphate. Its activity is regulated as follows. Activated by the G protein alpha subunit. Activated by the G protein beta and gamma subunit complex. Activated by GNA13 and GNA12. Ethanol and phorbol 12,13-dibutanoate significantly potentiate adenylate cyclase activity generated in response to the activation of the prostanoid receptor by the agonist prostaglandin E1(1-) in a PKC-dependent manner. Inhibited by lithium. Catalyzes the formation of cAMP in response to activation of G protein-coupled receptors. Functions in signaling cascades activated namely by thrombin and sphingosine 1-phosphate and mediates regulation of cAMP synthesis through synergistic action of the stimulatory G alpha protein with GNA13. Also, during inflammation, mediates zymosan-induced increase intracellular cAMP, leading to protein kinase A pathway activation in order to modulate innate immune responses through heterotrimeric G proteins G(12/13). Functions in signaling cascades activated namely by dopamine and C5 alpha chain and mediates regulation of cAMP synthesis through synergistic action of the stimulatory G protein with G beta:gamma complex. Functions, through cAMP response regulation, to keep inflammation under control during bacterial infection by sensing the presence of serum factors, such as the bioactive lysophospholipid (LPA) that regulate LPS-induced TNF-alpha production. However, it is also required for the optimal functions of B and T cells during adaptive immune responses by regulating cAMP synthesis in both B and T cells. This Homo sapiens (Human) protein is Adenylate cyclase type 7.